The chain runs to 365 residues: MTENHYLLLTPGPLTTTKTVKEVMLYDWCTWDVEYNMMVQQVRAKLVSLATKEEERYITVLMQGSGTFSVEAVIGSVIPKNGKMLVCTNGAYGKRIVQMAEMLHIDVVVSQTEEWEPTNIVEVEKILQQDKEITHIAVVHCETTTGIINPIVDVCKLGKQYGKVTLVDAMSSFGGIEIDIAELQIDFLISSANKCIQGVPGFGFVIAKRDELLKCKGQARSLSLDLYDKWETMENQNGKWRFTSPTHVVHAFYQALLELEKEGGVKARYNRYDNNQKLLVNRMREIGFKPLVDEKYQSPIITSFIYPEEWFDFEQLYNELKRDGFVIYPGKISKVDTFRIGNIGDVHEADIHRLVDSIAKGVVIG.

The residue at position 194 (K194) is an N6-(pyridoxal phosphate)lysine.

This sequence belongs to the class-V pyridoxal-phosphate-dependent aminotransferase family. PhnW subfamily. As to quaternary structure, homodimer. Pyridoxal 5'-phosphate is required as a cofactor.

The catalysed reaction is (2-aminoethyl)phosphonate + pyruvate = phosphonoacetaldehyde + L-alanine. Its function is as follows. Involved in phosphonate degradation. The chain is 2-aminoethylphosphonate--pyruvate transaminase from Bacillus cereus (strain AH187).